Consider the following 207-residue polypeptide: Transcriptional regulator GfcR (207 aa).

Belongs to the purine/pyrimidine phosphoribosyltransferase family. GfcR subfamily.

The chain is Transcriptional regulator GfcR from Methanocella arvoryzae (strain DSM 22066 / NBRC 105507 / MRE50).